The following is a 209-amino-acid chain: Imidazole glycerol phosphate synthase subunit HisH (209 aa).

One can recognise a Glutamine amidotransferase type-1 domain in the interval 1-205 (MIAIIDYGMG…KGVVETWKSS (205 aa)). The active-site Nucleophile is Cys-79. Residues His-180 and Glu-182 contribute to the active site.

In terms of assembly, heterodimer of HisH and HisF.

It localises to the cytoplasm. The catalysed reaction is 5-[(5-phospho-1-deoxy-D-ribulos-1-ylimino)methylamino]-1-(5-phospho-beta-D-ribosyl)imidazole-4-carboxamide + L-glutamine = D-erythro-1-(imidazol-4-yl)glycerol 3-phosphate + 5-amino-1-(5-phospho-beta-D-ribosyl)imidazole-4-carboxamide + L-glutamate + H(+). It catalyses the reaction L-glutamine + H2O = L-glutamate + NH4(+). Its pathway is amino-acid biosynthesis; L-histidine biosynthesis; L-histidine from 5-phospho-alpha-D-ribose 1-diphosphate: step 5/9. Functionally, IGPS catalyzes the conversion of PRFAR and glutamine to IGP, AICAR and glutamate. The HisH subunit catalyzes the hydrolysis of glutamine to glutamate and ammonia as part of the synthesis of IGP and AICAR. The resulting ammonia molecule is channeled to the active site of HisF. The sequence is that of Imidazole glycerol phosphate synthase subunit HisH from Bacillus cereus (strain AH187).